Here is a 384-residue protein sequence, read N- to C-terminus: 1-deoxy-D-xylulose 5-phosphate reductoisomerase (384 aa).

NADPH contacts are provided by T10, G11, S12, I13, R37, N38, and N124. K125 serves as a coordination point for 1-deoxy-D-xylulose 5-phosphate. Position 126 (E126) interacts with NADPH. D150 serves as a coordination point for Mn(2+). 1-deoxy-D-xylulose 5-phosphate is bound by residues S151, E152, S176, and H199. Mn(2+) is bound at residue E152. G205 is an NADPH binding site. 1-deoxy-D-xylulose 5-phosphate is bound by residues S212, N217, K218, and E221. Residue E221 coordinates Mn(2+).

Belongs to the DXR family. Mg(2+) is required as a cofactor. It depends on Mn(2+) as a cofactor.

It catalyses the reaction 2-C-methyl-D-erythritol 4-phosphate + NADP(+) = 1-deoxy-D-xylulose 5-phosphate + NADPH + H(+). It functions in the pathway isoprenoid biosynthesis; isopentenyl diphosphate biosynthesis via DXP pathway; isopentenyl diphosphate from 1-deoxy-D-xylulose 5-phosphate: step 1/6. Catalyzes the NADPH-dependent rearrangement and reduction of 1-deoxy-D-xylulose-5-phosphate (DXP) to 2-C-methyl-D-erythritol 4-phosphate (MEP). This Clostridium perfringens (strain 13 / Type A) protein is 1-deoxy-D-xylulose 5-phosphate reductoisomerase.